The chain runs to 496 residues: Cytochrome P450 71D180 (496 aa).

Residues M1–M21 traverse the membrane as a helical; Signal-anchor for type II membrane protein segment. C435 is a heme binding site. The tract at residues M471 to S496 is disordered.

The protein belongs to the cytochrome P450 family. The cofactor is heme. In terms of tissue distribution, mostly expressed in flowers and stems, and, to a lower extent, in leaves.

The protein localises to the membrane. It carries out the reaction gamma-terpinene + 2 reduced [NADPH--hemoprotein reductase] + 2 O2 = carvacrol + 2 oxidized [NADPH--hemoprotein reductase] + 3 H2O + 2 H(+). The catalysed reaction is (4S)-limonene + reduced [NADPH--hemoprotein reductase] + O2 = (1S,5R)-carveol + oxidized [NADPH--hemoprotein reductase] + H2O + H(+). The enzyme catalyses (4R)-limonene + reduced [NADPH--hemoprotein reductase] + O2 = (1R,5S)-carveol + oxidized [NADPH--hemoprotein reductase] + H2O + H(+). The protein operates within secondary metabolite biosynthesis; terpenoid biosynthesis. In terms of biological role, involved in the biosynthesis of phenolic monoterpenes natural products thymol and carvacrol which have a broad range of biological activities acting as antimicrobial compounds, insecticides, antioxidants and pharmaceutical agents. Catalyzes the C2-hydroxylation of gamma-terpinene to produce carvacrol. Also mediates the C6-hydroxylation of (4S)-limonene and (4R)-limonene to form carveol. The polypeptide is Cytochrome P450 71D180 (Origanum vulgare (Wild marjoram)).